Consider the following 1823-residue polypeptide: WD repeat-containing protein DDB_G0292056 (1823 aa).

The tract at residues 1–68 (MTYNNNNNYL…IGNSSGGGGV (68 aa)) is disordered. Residues 16 to 61 (TSTSTSTSTSTPTSTKTSPLNTSSSSNILKSNSRNPSPNNPTNIGN) show a composition bias toward low complexity. WD repeat units lie at residues 138–177 (QSKW…YPLL), 182–222 (SHQR…KAVK), 228–267 (SHIL…QELN), 270–310 (VHSA…PKST), 312–354 (ITSN…YSTP), and 360–405 (GHTD…KDLF). Disordered regions lie at residues 418–461 (PTTT…LLST), 530–562 (QPDD…NNNN), 649–687 (NITE…GFLK), 714–778 (IDIS…YRPG), 805–840 (ILTN…TNDQ), 883–940 (IPNN…SSTS), 966–996 (SSSS…NPPR), 1014–1058 (NNIT…NDNP), and 1122–1186 (QQLV…NGKS). Low complexity-rich tracts occupy residues 419 to 432 (TTTT…TTTT) and 440 to 461 (LNES…LLST). 2 stretches are compositionally biased toward low complexity: residues 654-680 (NNNN…NNNN) and 717-748 (SQQQ…QQQQ). Composition is skewed to polar residues over residues 749–768 (FLTA…SPTS) and 827–840 (MNAS…TNDQ). Low complexity-rich tracts occupy residues 885 to 926 (NNNK…SSNN), 966 to 993 (SSSS…KNIN), 1014 to 1041 (NNIT…NRLN), and 1127 to 1183 (SSSP…NNGN). A WD 7 repeat occupies 1207–1250 (ANSYILSGKPVEEICKYNSELAEKENRKDLVKLWNTLGMITDSK). Disordered regions lie at residues 1264-1307 (SHFG…LHQS), 1697-1725 (QQQP…HTHN), and 1764-1823 (PQQE…MFSN). Over residues 1282–1293 (STGIASSTGSNS) the composition is skewed to low complexity. The segment covering 1710–1725 (MSGTSHYHQQQPHTHN) has biased composition (polar residues).

This is WD repeat-containing protein DDB_G0292056 from Dictyostelium discoideum (Social amoeba).